An 86-amino-acid polypeptide reads, in one-letter code: Small ribosomal subunit protein uS15 (86 aa).

The protein belongs to the universal ribosomal protein uS15 family. In terms of assembly, part of the 30S ribosomal subunit. Forms a bridge to the 50S subunit in the 70S ribosome, contacting the 23S rRNA.

One of the primary rRNA binding proteins, it binds directly to 16S rRNA where it helps nucleate assembly of the platform of the 30S subunit by binding and bridging several RNA helices of the 16S rRNA. In terms of biological role, forms an intersubunit bridge (bridge B4) with the 23S rRNA of the 50S subunit in the ribosome. The sequence is that of Small ribosomal subunit protein uS15 from Mycoplasma genitalium (strain ATCC 33530 / DSM 19775 / NCTC 10195 / G37) (Mycoplasmoides genitalium).